The chain runs to 710 residues: MANEEDDPVIQEIDVYLAKSLAEKLYLFQYPVRPASMTYDDIPHLSAKIKPKQQKVELEMAIDTLNPNYCRSKGEQIALNVDGACADETSTYSSKLMDKQTFCSSQTTSNTARYAAALYRQGELHLTPLHGILQLRPSFSYLDKADAKHREREAANEAGDSSQDEAEEDVKQITVRFSRPESEQARQRRVQSYEFLQKKHAEEPWVHLHYYGMRDSRSEHERQYLLCQGSSGVENTELVKSPSEYLMMLMPPSPEEEKDKPVAPSNVLSMAQLRTLPLADQIKVLMKNVKVMPFANLMSLLGPSVDSVAVLRGIQKVAMLVQGNWVVKSDILYPKDSSSPHSGMPAEVLCRGRDFVMWKFTQSRWVVRKEVAAVTKLCAEDVKDFLEHMAVVRINKGWEFLLPYDLEFIKKHPDVVQRQHMLWSGIQAKLEKVYNLVKETMPKKPDGQSAPVGLVSGEQRVQTAKTKAQQNHAFLERELQRRKEQMRAATVLPSVQIKEEPLSEEEADGAELEAEEEEPMDTAPSTCLSTKLANGLPAGRAVGGDSLNGHPVPGCASNPVACELKAFVEATFQRQFVLTLSELKRLFNLHLAGLPPGHILFSGVSDRMLQDTVLAAGCKQILVPFPPQTAASPDEQKVFALWESGDMSDQHRQVLLEIFSKNYRVRRNLIQSRLTQECGEELSKQEVDKVLKDCCVSCGGMWYLKGTVQS.

Residues 146 to 155 (DAKHREREAA) show a composition bias toward basic and acidic residues. Residues 146-169 (DAKHREREAANEAGDSSQDEAEED) are disordered. Phosphoserine occurs at positions 161 and 162. Lysine 171 is covalently cross-linked (Glycyl lysine isopeptide (Lys-Gly) (interchain with G-Cter in SUMO2)). The residue at position 192 (serine 192) is a Phosphoserine. Tyrosine 224 is subject to Phosphotyrosine. Residue lysine 432 forms a Glycyl lysine isopeptide (Lys-Gly) (interchain with G-Cter in SUMO2) linkage. A Glycyl lysine isopeptide (Lys-Gly) (interchain with G-Cter in SUMO1); alternate cross-link involves residue lysine 498. Residue lysine 498 forms a Glycyl lysine isopeptide (Lys-Gly) (interchain with G-Cter in SUMO2); alternate linkage. Residues 498–526 (KEEPLSEEEADGAELEAEEEEPMDTAPST) form a disordered region. Residues 502 to 520 (LSEEEADGAELEAEEEEPM) show a composition bias toward acidic residues. Position 503 is a phosphoserine (serine 503). The required for Pol III complex stability stretch occupies residues 558 to 710 (NPVACELKAF…MWYLKGTVQS (153 aa)). A Glycyl lysine isopeptide (Lys-Gly) (interchain with G-Cter in SUMO2) cross-link involves residue lysine 661.

As to quaternary structure, component of the RNA polymerase III complex consisting of at least 17 subunits: a ten-subunit horseshoe-shaped catalytic core composed of POLR3A/RPC1, POLR3B/RPC2, POLR1C/RPAC1, POLR1D/RPAC2, POLR3K/RPC10, POLR2E/RPABC1, POLR2F/RPABC2, POLR2H/RPABC3, POLR2K/RPABC4 and POLR2L/RPABC5; the stalk composed of two subunits POLR3H/RPC8 and CRCP/RPC9, forming a structural mobile part that protrudes out of the core and functions primarily in transcription initiation; and additional subunits homologous to general transcription factors of the RNA polymerase II machinery, POLR3D/RPC4-POLR3E/RPC5 heterodimer and POLR3/CRPC3-POLR3F/RPC6-POLR3G/RPC7 heterotrimer.

The protein localises to the nucleus. DNA-dependent RNA polymerase catalyzes the transcription of DNA into RNA using the four ribonucleoside triphosphates as substrates. Specific peripheric component of RNA polymerase III (Pol III) which synthesizes small non-coding RNAs including 5S rRNA, snRNAs, tRNAs and miRNAs from at least 500 distinct genomic loci. Assembles with POLR3D/RPC4 forming a subcomplex that binds the Pol III core. Enables recruitment of Pol III at transcription initiation site and drives transcription initiation from both type 2 and type 3 DNA promoters. Required for efficient transcription termination and reinitiation. Plays a key role in sensing and limiting infection by intracellular bacteria and DNA viruses. Acts as a nuclear and cytosolic DNA sensor involved in innate immune response. Can sense non-self dsDNA that serves as template for transcription into dsRNA. The non-self RNA polymerase III transcripts, such as Epstein-Barr virus-encoded RNAs (EBERs) induce type I interferon and NF-kappa-B through the RIG-I pathway. This chain is DNA-directed RNA polymerase III subunit RPC5, found in Mus musculus (Mouse).